The following is a 277-amino-acid chain: Undecaprenyl-diphosphatase (277 aa).

Helical transmembrane passes span 3-23 (IVLL…EFLP), 43-63 (VGKV…ILVY), 85-105 (LNVL…GKAI), 109-129 (LFTP…ILWA), 189-209 (TDFS…YSLF), 218-238 (ADLP…WLCI), and 249-269 (SFVG…ATAW).

Belongs to the UppP family.

The protein localises to the cell inner membrane. It catalyses the reaction di-trans,octa-cis-undecaprenyl diphosphate + H2O = di-trans,octa-cis-undecaprenyl phosphate + phosphate + H(+). In terms of biological role, catalyzes the dephosphorylation of undecaprenyl diphosphate (UPP). Confers resistance to bacitracin. The protein is Undecaprenyl-diphosphatase of Albidiferax ferrireducens (strain ATCC BAA-621 / DSM 15236 / T118) (Rhodoferax ferrireducens).